The chain runs to 88 residues: Sec-independent protein translocase protein TatA (88 aa).

The chain crosses the membrane as a helical span at residues 1–21 (MGGIGIWQLAIITVIVILLFG). The tract at residues 46–88 (DNDKDSTQVDDKDSTQVDDNAKQPSNKKVEENIKEQSKEKDRA) is disordered.

This sequence belongs to the TatA/E family. In terms of assembly, the Tat system comprises two distinct complexes: a TatABC complex, containing multiple copies of TatA, TatB and TatC subunits, and a separate TatA complex, containing only TatA subunits. Substrates initially bind to the TatABC complex, which probably triggers association of the separate TatA complex to form the active translocon.

It is found in the cell inner membrane. Part of the twin-arginine translocation (Tat) system that transports large folded proteins containing a characteristic twin-arginine motif in their signal peptide across membranes. TatA could form the protein-conducting channel of the Tat system. The sequence is that of Sec-independent protein translocase protein TatA from Psychromonas ingrahamii (strain DSM 17664 / CCUG 51855 / 37).